Here is a 941-residue protein sequence, read N- to C-terminus: Peroxisomal ATPase PEX6 (941 aa).

ATP is bound by residues 384 to 391 (GIPGCGKR) and 698 to 705 (GPPGTGKT).

This sequence belongs to the AAA ATPase family. As to quaternary structure, interacts with PEX1; forming the PEX1-PEX6 AAA ATPase complex, which is composed of a heterohexamer formed by a trimer of PEX1-PEX6 dimers. Interacts with APME9.

The protein localises to the cytoplasm. It is found in the cytosol. The protein resides in the peroxisome membrane. The catalysed reaction is ATP + H2O = ADP + phosphate + H(+). Its function is as follows. Component of the PEX1-PEX6 AAA ATPase complex, a protein dislocase complex that mediates the ATP-dependent extraction of the PEX5 receptor from peroxisomal membranes, an essential step for PEX5 recycling. Specifically recognizes PEX5 monoubiquitinated at 'Cys-11', and pulls it out of the peroxisome lumen through the PEX2-PEX10-PEX12 retrotranslocation channel. Extraction by the PEX1-PEX6 AAA ATPase complex is accompanied by unfolding of the TPR repeats and release of bound cargo from PEX5. Required for jasmonate biosynthesis. Necessary for the developmental elimination of obsolete peroxisome matix proteins. This Arabidopsis thaliana (Mouse-ear cress) protein is Peroxisomal ATPase PEX6.